Consider the following 179-residue polypeptide: Methylated-DNA--protein-cysteine methyltransferase (179 aa).

The Nucleophile; methyl group acceptor role is filled by Cys-130.

This sequence belongs to the MGMT family.

The protein resides in the cytoplasm. The enzyme catalyses a 6-O-methyl-2'-deoxyguanosine in DNA + L-cysteinyl-[protein] = S-methyl-L-cysteinyl-[protein] + a 2'-deoxyguanosine in DNA. It catalyses the reaction a 4-O-methyl-thymidine in DNA + L-cysteinyl-[protein] = a thymidine in DNA + S-methyl-L-cysteinyl-[protein]. Involved in the cellular defense against the biological effects of O6-methylguanine (O6-MeG) and O4-methylthymine (O4-MeT) in DNA. Repairs the methylated nucleobase in DNA by stoichiometrically transferring the methyl group to a cysteine residue in the enzyme. This is a suicide reaction: the enzyme is irreversibly inactivated. The sequence is that of Methylated-DNA--protein-cysteine methyltransferase from Haemophilus influenzae (strain ATCC 51907 / DSM 11121 / KW20 / Rd).